The sequence spans 138 residues: Transcription antitermination protein NusB (138 aa).

It belongs to the NusB family.

Involved in transcription antitermination. Required for transcription of ribosomal RNA (rRNA) genes. Binds specifically to the boxA antiterminator sequence of the ribosomal RNA (rrn) operons. The sequence is that of Transcription antitermination protein NusB from Leptospira borgpetersenii serovar Hardjo-bovis (strain JB197).